The chain runs to 357 residues: Aspartate carbamoyltransferase catalytic subunit (357 aa).

Polar residues predominate over residues 1–15 (MSNSIDSQSLPTVSP). Positions 1–21 (MSNSIDSQSLPTVSPTDYARF) are disordered. The carbamoyl phosphate site is built by R97 and T98. Position 125 (K125) interacts with L-aspartate. The carbamoyl phosphate site is built by R147, H177, and Q180. Positions 211 and 266 each coordinate L-aspartate. 2 residues coordinate carbamoyl phosphate: G307 and P308.

It belongs to the aspartate/ornithine carbamoyltransferase superfamily. ATCase family. In terms of assembly, heterododecamer (2C3:3R2) of six catalytic PyrB chains organized as two trimers (C3), and six regulatory PyrI chains organized as three dimers (R2).

It catalyses the reaction carbamoyl phosphate + L-aspartate = N-carbamoyl-L-aspartate + phosphate + H(+). It functions in the pathway pyrimidine metabolism; UMP biosynthesis via de novo pathway; (S)-dihydroorotate from bicarbonate: step 2/3. Its function is as follows. Catalyzes the condensation of carbamoyl phosphate and aspartate to form carbamoyl aspartate and inorganic phosphate, the committed step in the de novo pyrimidine nucleotide biosynthesis pathway. This Psychrobacter cryohalolentis (strain ATCC BAA-1226 / DSM 17306 / VKM B-2378 / K5) protein is Aspartate carbamoyltransferase catalytic subunit.